Here is a 260-residue protein sequence, read N- to C-terminus: Purine nucleoside phosphorylase XF_0940 (260 aa).

Residues histidine 79, cysteine 120, and histidine 137 each coordinate Zn(2+).

The protein belongs to the purine nucleoside phosphorylase YfiH/LACC1 family. Homodimer. Cu(2+) serves as cofactor. The cofactor is Zn(2+).

It catalyses the reaction adenosine + phosphate = alpha-D-ribose 1-phosphate + adenine. It carries out the reaction S-methyl-5'-thioadenosine + phosphate = 5-(methylsulfanyl)-alpha-D-ribose 1-phosphate + adenine. The catalysed reaction is inosine + phosphate = alpha-D-ribose 1-phosphate + hypoxanthine. The enzyme catalyses adenosine + H2O + H(+) = inosine + NH4(+). In terms of biological role, purine nucleoside enzyme that catalyzes the phosphorolysis of adenosine and inosine nucleosides, yielding D-ribose 1-phosphate and the respective free bases, adenine and hypoxanthine. Also catalyzes the phosphorolysis of S-methyl-5'-thioadenosine into adenine and S-methyl-5-thio-alpha-D-ribose 1-phosphate. Also has adenosine deaminase activity. The polypeptide is Purine nucleoside phosphorylase XF_0940 (Xylella fastidiosa (strain 9a5c)).